Consider the following 224-residue polypeptide: Octanoyltransferase (224 aa).

The BPL/LPL catalytic domain occupies 33-213; sequence GTTAETMLLL…ALQAEFGREA (181 aa). The tract at residues 51–71 is disordered; it reads GKRTTDDERPTDGTPVVDVDR. Substrate-binding positions include 71–78, 143–145, and 156–158; these read RGGKITWH, AIG, and GFA. The active-site Acyl-thioester intermediate is the Cys-174.

It belongs to the LipB family.

It localises to the cytoplasm. It catalyses the reaction octanoyl-[ACP] + L-lysyl-[protein] = N(6)-octanoyl-L-lysyl-[protein] + holo-[ACP] + H(+). It functions in the pathway protein modification; protein lipoylation via endogenous pathway; protein N(6)-(lipoyl)lysine from octanoyl-[acyl-carrier-protein]: step 1/2. Functionally, catalyzes the transfer of endogenously produced octanoic acid from octanoyl-acyl-carrier-protein onto the lipoyl domains of lipoate-dependent enzymes. Lipoyl-ACP can also act as a substrate although octanoyl-ACP is likely to be the physiological substrate. This is Octanoyltransferase from Leifsonia xyli subsp. xyli (strain CTCB07).